Here is a 178-residue protein sequence, read N- to C-terminus: Crossover junction endodeoxyribonuclease RuvC (178 aa).

Catalysis depends on residues D18, E78, and D150. Mg(2+) contacts are provided by D18, E78, and D150.

This sequence belongs to the RuvC family. As to quaternary structure, homodimer which binds Holliday junction (HJ) DNA. The HJ becomes 2-fold symmetrical on binding to RuvC with unstacked arms; it has a different conformation from HJ DNA in complex with RuvA. In the full resolvosome a probable DNA-RuvA(4)-RuvB(12)-RuvC(2) complex forms which resolves the HJ. Requires Mg(2+) as cofactor.

Its subcellular location is the cytoplasm. It carries out the reaction Endonucleolytic cleavage at a junction such as a reciprocal single-stranded crossover between two homologous DNA duplexes (Holliday junction).. The RuvA-RuvB-RuvC complex processes Holliday junction (HJ) DNA during genetic recombination and DNA repair. Endonuclease that resolves HJ intermediates. Cleaves cruciform DNA by making single-stranded nicks across the HJ at symmetrical positions within the homologous arms, yielding a 5'-phosphate and a 3'-hydroxyl group; requires a central core of homology in the junction. The consensus cleavage sequence is 5'-(A/T)TT(C/G)-3'. Cleavage occurs on the 3'-side of the TT dinucleotide at the point of strand exchange. HJ branch migration catalyzed by RuvA-RuvB allows RuvC to scan DNA until it finds its consensus sequence, where it cleaves and resolves the cruciform DNA. This chain is Crossover junction endodeoxyribonuclease RuvC, found in Granulibacter bethesdensis (strain ATCC BAA-1260 / CGDNIH1).